Here is a 159-residue protein sequence, read N- to C-terminus: Phosphopantetheine adenylyltransferase (159 aa).

Substrate is bound at residue T10. Residues 10–11 (TF) and H18 each bind ATP. Substrate contacts are provided by K42, L74, and R88. Residues 89–91 (GLR), E99, and 124–130 (NSFISST) each bind ATP.

This sequence belongs to the bacterial CoaD family. Homohexamer. The cofactor is Mg(2+).

The protein resides in the cytoplasm. It catalyses the reaction (R)-4'-phosphopantetheine + ATP + H(+) = 3'-dephospho-CoA + diphosphate. The protein operates within cofactor biosynthesis; coenzyme A biosynthesis; CoA from (R)-pantothenate: step 4/5. In terms of biological role, reversibly transfers an adenylyl group from ATP to 4'-phosphopantetheine, yielding dephospho-CoA (dPCoA) and pyrophosphate. In Shewanella halifaxensis (strain HAW-EB4), this protein is Phosphopantetheine adenylyltransferase.